The primary structure comprises 512 residues: 2,3-bisphosphoglycerate-independent phosphoglycerate mutase (512 aa).

2 residues coordinate Mn(2+): Asp13 and Ser63. Ser63 functions as the Phosphoserine intermediate in the catalytic mechanism. Residues His124, 154–155 (RD), Arg186, Arg192, 262–265 (RPDR), and Lys337 contribute to the substrate site. 5 residues coordinate Mn(2+): Asp404, His408, Asp445, His446, and His463.

Belongs to the BPG-independent phosphoglycerate mutase family. In terms of assembly, monomer. Mn(2+) is required as a cofactor.

It carries out the reaction (2R)-2-phosphoglycerate = (2R)-3-phosphoglycerate. It functions in the pathway carbohydrate degradation; glycolysis; pyruvate from D-glyceraldehyde 3-phosphate: step 3/5. Functionally, essential for rapid growth and for sporulation. Catalyzes the interconversion of 2-phosphoglycerate and 3-phosphoglycerate. The protein is 2,3-bisphosphoglycerate-independent phosphoglycerate mutase of Oceanobacillus iheyensis (strain DSM 14371 / CIP 107618 / JCM 11309 / KCTC 3954 / HTE831).